We begin with the raw amino-acid sequence, 543 residues long: MTPSELKRLYQITKVQLEYGLDELLPDHALTQLPKRLRKGLFWIKNRYPEKPLGERLRLALQELGPVWIKFGQMMSTRRDLFPPHLADQLALLQDQVAPFDGQLAKDQMELSLGGPLENWFTDFDIVPLASASIAQVHTAKLKESGREIVLKVIRPDIRPVIEADIRLMYRMATLVEKHIPEARRLKPVEVIEEYEKTLIDELDLRREASNAMQLRRNFEGSEELYVPEVILDVSSEHLMVSERIYGIQVSDIEQLEKNGTNMKLLAERGVSVFFTQVFRDSFFHADMHPGNVFVNPDNPENPQWIGLDCGIVGTLNKEDKRYLAENLLGFFNSDYRKVAQLHIDSGWVPAETNVEEFEFAIRIVCEPIFAKPLGEISFGHVLLNLFNTARRFNMEVQPQLVLLQKTLLYVEGLGRQLYPQLDLWATAKPFLETWMAKQIGPAAFLTALTEKAPFWAEKLPELPDLVYDSLRQGKVLNQRMDKLYAGYRQSKRQQAKGQFLFNVGATLLICSAVLLTSNITALASISAATGVTFWLLSWRAYR.

One can recognise a Protein kinase domain in the interval 123–501 (DFDIVPLASA…KRQQAKGQFL (379 aa)). ATP-binding positions include 129–137 (LASASIAQV) and lysine 152. The active-site Proton acceptor is aspartate 287. A helical membrane pass occupies residues 517 to 539 (TSNITALASISAATGVTFWLLSW).

This sequence belongs to the ABC1 family. UbiB subfamily.

The protein localises to the cell inner membrane. It functions in the pathway cofactor biosynthesis; ubiquinone biosynthesis [regulation]. In terms of biological role, is probably a protein kinase regulator of UbiI activity which is involved in aerobic coenzyme Q (ubiquinone) biosynthesis. This chain is Probable protein kinase UbiB, found in Aliivibrio salmonicida (strain LFI1238) (Vibrio salmonicida (strain LFI1238)).